The sequence spans 512 residues: Cytochrome P450 monooxygenase adrA (512 aa).

Residues 12–32 form a helical membrane-spanning segment; the sequence is FEPVSLVGLVLLSGLFLLLTA. 3 N-linked (GlcNAc...) asparagine glycosylation sites follow: asparagine 86, asparagine 149, and asparagine 210. Residue cysteine 453 participates in heme binding.

This sequence belongs to the cytochrome P450 family. Heme serves as cofactor.

Its subcellular location is the membrane. Its pathway is secondary metabolite biosynthesis; terpenoid biosynthesis. Its function is as follows. Cytochrome P450 monooxygenase; part of the gene cluster that mediates the biosynthesis of andrastins, meroterpenoid compounds that exhibit inhibitory activity against ras farnesyltransferase, suggesting that they could be promising leads for antitumor agents. The first step of the pathway is the synthesis of 3,5-dimethylorsellinic acid (DMOA) by the polyketide synthase adrD via condensation of one acetyl-CoA starter unit with 3 malonyl-CoA units and 2 methylations. DMAO is then converted to farnesyl-DMAO by the prenyltransferase adrG. The methyltransferase adrK catalyzes the methylation of the carboxyl group of farnesyl-DMAO to farnesyl-DMAO methyl ester which is further converted to epoxyfarnesyl-DMAO methyl ester by the FAD-dependent monooxygenase adrH. The terpene cyclase adrI then catalyzes the carbon skeletal rearrangement to generate the andrastin E, the first compound in the pathway having the andrastin scaffold, with the tetracyclic ring system. The post-cyclization tailoring enzymes adrF, adrE, adrJ, and adrA, are involved in the conversion of andrastin E into andrastin A. The short chain dehydrogenase adrF is responsible for the oxidation of the C-3 a hydroxyl group of andrastin E to yield the corresponding ketone, andrastin D. The ketoreductase adrE stereoselectively reduces the carbonyl moiety to reverse the stereochemistry of the C-3 position to yield andrastin F. The acetyltransferase adrJ is the acetyltransferase that attaches the acetyl group to the C-3 hydroxyl group of andrastin F to yield andrastin C. Finally, the cytochrome P450 monooxygenase adrA catalyzes two sequential oxidation reactions of the C-23 methyl group, to generate the corresponding alcohol andrastin B, and aldehyde andrastin A. The sequence is that of Cytochrome P450 monooxygenase adrA from Penicillium rubens (strain ATCC 28089 / DSM 1075 / NRRL 1951 / Wisconsin 54-1255) (Penicillium chrysogenum).